The chain runs to 195 residues: PRELI domain containing protein 3B (195 aa).

Positions 1–172 (MKIWTSEHVF…VIHKLNAEIE (172 aa)) constitute a PRELI/MSF1 domain. A phosphoserine mark is found at Ser-46 and Ser-51.

It belongs to the slowmo family.

The polypeptide is PRELI domain containing protein 3B (Prelid3b) (Mus musculus (Mouse)).